A 155-amino-acid chain; its full sequence is RING finger protein 122 (155 aa).

A helical transmembrane segment spans residues 40-60; it reads VIFGTGIFVFMLSLIFCCYFI. The RING-type; atypical zinc finger occupies 93–134; sequence CAVCLEDFKGKDELGVLPCQHAFHRKCLVKWLEVRCVCPMCN.

As to expression, widely expressed in several tissues and cell lines.

The protein resides in the golgi apparatus. The protein localises to the endoplasmic reticulum. It localises to the membrane. In terms of biological role, may induce necrosis and apoptosis. May play a role in cell viability. The sequence is that of RING finger protein 122 (RNF122) from Homo sapiens (Human).